We begin with the raw amino-acid sequence, 335 residues long: MSHIAKIYTDKDTTLDPMKGKKIAVLGYGSQGRAWALNLRDSGLQVTVGLEREGKSWEQAKADGFTPKKTEDAVKDADVVIFLVPDMAQRLVYRERVQPYLREGMDLVFAHGFNIHYRLIEPPSNVDVYMVAPKGPGPIVRDFYVKGGGVPVLVAVHQNHSGKALEKALAIAKALGGTRAGAIETTFKEETETDLIGEQTILVGGVMELMKAAFETLVEMGYQPEVAYFETINELKMIVDLIYDKGFMGMLRAVSDTAKYGGFTVGKQVINEETRRRLREAAEKVRSGKFAEEWIEEYGRGSPTLSKGLEEMDKSLEEQTGRRLKEIIERGRPKS.

The region spanning 5-185 (AKIYTDKDTT…GGTRAGAIET (181 aa)) is the KARI N-terminal Rossmann domain. NADP(+) contacts are provided by residues 28 to 31 (YGSQ), Arg52, Ser56, and 86 to 89 (DMAQ). His111 is a catalytic residue. Gly137 lines the NADP(+) pocket. Residues 186 to 331 (TFKEETETDL…RRLKEIIERG (146 aa)) form the KARI C-terminal knotted domain. Mg(2+)-binding residues include Asp194, Glu198, Glu230, and Glu234. Ser255 serves as a coordination point for substrate. A disordered region spans residues 301–335 (GSPTLSKGLEEMDKSLEEQTGRRLKEIIERGRPKS). Basic and acidic residues predominate over residues 308 to 335 (GLEEMDKSLEEQTGRRLKEIIERGRPKS).

The protein belongs to the ketol-acid reductoisomerase family. Mg(2+) serves as cofactor.

The catalysed reaction is (2R)-2,3-dihydroxy-3-methylbutanoate + NAD(+) = (2S)-2-acetolactate + NADH + H(+). It carries out the reaction (2R)-2,3-dihydroxy-3-methylbutanoate + NADP(+) = (2S)-2-acetolactate + NADPH + H(+). The protein operates within amino-acid biosynthesis; L-isoleucine biosynthesis; L-isoleucine from 2-oxobutanoate: step 2/4. It participates in amino-acid biosynthesis; L-valine biosynthesis; L-valine from pyruvate: step 2/4. Functionally, involved in the biosynthesis of branched-chain amino acids (BCAA). Catalyzes an alkyl-migration followed by a ketol-acid reduction of (S)-2-acetolactate (S2AL) to yield (R)-2,3-dihydroxy-isovalerate. In the isomerase reaction, S2AL is rearranged via a Mg-dependent methyl migration to produce 3-hydroxy-3-methyl-2-ketobutyrate (HMKB). In the reductase reaction, this 2-ketoacid undergoes a metal-dependent reduction by NADPH or NADH to yield (R)-2,3-dihydroxy-isovalerate. In Metallosphaera sedula (strain ATCC 51363 / DSM 5348 / JCM 9185 / NBRC 15509 / TH2), this protein is Ketol-acid reductoisomerase (NAD(P)(+)).